The primary structure comprises 93 residues: MVTKEQVEASLTSKLKPIHLEVIDISGGCGSSFEVEVVSEQFEGKRLLERHRMVNAALEEEMKEIHALSIKKAQTPQQWKPPSQDSATLTKDA.

Residue Cys-29 is modified to S-glutathionyl cysteine; transient; alternate. Residues 72 to 93 are disordered; sequence KAQTPQQWKPPSQDSATLTKDA.

The protein belongs to the bolA/yrbA family. As to quaternary structure, homodimer. Interacts in vitro with GRXS14, GRXS15, GRXS16 and GRXS17, but not with GRXC5. Interacts in vivo only with GRXS17. Post-translationally, can be either glutathionylated or forming covalent homodimers, depending on the oxidation state.

The protein localises to the cytoplasm. It is found in the nucleus. Functionally, may act either alone or in interaction with glutaredoxin as a redox-regulated transcriptional regulator, or as a factor regulating Fe-S cluster biogenesis. The GRXS17-BOLA2 heterodimer binds a labile, oxygen sensitive iron-sulfur cluster. The sequence is that of Protein BOLA2 from Arabidopsis thaliana (Mouse-ear cress).